The following is a 171-amino-acid chain: MGGLEEDLLRVGAIKFGDFVLTSGKRSTYYVDIKEAATDPSVLRKIASEFSGMIRSSKIAGMELGAVPLIVATALQMSIPYIIVRKERSHGTMSLLVGKFEKGEEIDVIEDVVTTGNSVLKAVNTLRENGAVVKRAYCVVDREEGGSDLLKENGIDLHPIIRISQVKGFRK.

5-phospho-alpha-D-ribose 1-diphosphate contacts are provided by residues Arg-85, Lys-86, Arg-88, His-90, and 110–118 (EDVVTTGNS). 2 residues coordinate orotate: Thr-114 and Arg-142.

This sequence belongs to the purine/pyrimidine phosphoribosyltransferase family. PyrE subfamily. As to quaternary structure, homodimer. The cofactor is Mg(2+).

It carries out the reaction orotidine 5'-phosphate + diphosphate = orotate + 5-phospho-alpha-D-ribose 1-diphosphate. It participates in pyrimidine metabolism; UMP biosynthesis via de novo pathway; UMP from orotate: step 1/2. Functionally, catalyzes the transfer of a ribosyl phosphate group from 5-phosphoribose 1-diphosphate to orotate, leading to the formation of orotidine monophosphate (OMP). The sequence is that of Orotate phosphoribosyltransferase from Thermoplasma acidophilum (strain ATCC 25905 / DSM 1728 / JCM 9062 / NBRC 15155 / AMRC-C165).